We begin with the raw amino-acid sequence, 346 residues long: Small ribosomal subunit biogenesis GTPase RsgA 1 (346 aa).

The CP-type G domain occupies E93–F248. GTP contacts are provided by residues T138 to D141 and G190 to S198. Zn(2+) contacts are provided by C271, C276, H278, and C284.

Belongs to the TRAFAC class YlqF/YawG GTPase family. RsgA subfamily. Monomer. Associates with 30S ribosomal subunit, binds 16S rRNA. Zn(2+) is required as a cofactor.

It is found in the cytoplasm. Functionally, one of several proteins that assist in the late maturation steps of the functional core of the 30S ribosomal subunit. Helps release RbfA from mature subunits. May play a role in the assembly of ribosomal proteins into the subunit. Circularly permuted GTPase that catalyzes slow GTP hydrolysis, GTPase activity is stimulated by the 30S ribosomal subunit. This is Small ribosomal subunit biogenesis GTPase RsgA 1 from Listeria innocua serovar 6a (strain ATCC BAA-680 / CLIP 11262).